A 406-amino-acid polypeptide reads, in one-letter code: Argininosuccinate synthase (406 aa).

Residues 11-19 (AYSGGLDTS) and alanine 38 contribute to the ATP site. L-citrulline-binding residues include tyrosine 91 and serine 96. Glycine 121 is a binding site for ATP. The L-aspartate site is built by threonine 123, asparagine 127, and aspartate 128. Residue asparagine 127 participates in L-citrulline binding. L-citrulline is bound by residues arginine 131, serine 181, serine 190, glutamate 266, and tyrosine 278.

It belongs to the argininosuccinate synthase family. Type 1 subfamily. In terms of assembly, homotetramer.

It localises to the cytoplasm. It catalyses the reaction L-citrulline + L-aspartate + ATP = 2-(N(omega)-L-arginino)succinate + AMP + diphosphate + H(+). The protein operates within amino-acid biosynthesis; L-arginine biosynthesis; L-arginine from L-ornithine and carbamoyl phosphate: step 2/3. The polypeptide is Argininosuccinate synthase (Campylobacter jejuni subsp. doylei (strain ATCC BAA-1458 / RM4099 / 269.97)).